The sequence spans 174 residues: UPF0340 protein SE_1711 (174 aa).

Belongs to the UPF0340 family.

The sequence is that of UPF0340 protein SE_1711 from Staphylococcus epidermidis (strain ATCC 12228 / FDA PCI 1200).